The chain runs to 463 residues: Bifunctional protein HldE (463 aa).

The interval 1–315 (MKKILVIGDL…LILNQTHPKI (315 aa)) is ribokinase. 191 to 194 (NRAE) is an ATP binding site. Residue Asp260 is part of the active site. Residues 334-463 (FTNGCFDLLH…IEKIKRTHND (130 aa)) form a cytidylyltransferase region.

It in the N-terminal section; belongs to the carbohydrate kinase PfkB family. The protein in the C-terminal section; belongs to the cytidylyltransferase family. Homodimer.

It carries out the reaction D-glycero-beta-D-manno-heptose 7-phosphate + ATP = D-glycero-beta-D-manno-heptose 1,7-bisphosphate + ADP + H(+). It catalyses the reaction D-glycero-beta-D-manno-heptose 1-phosphate + ATP + H(+) = ADP-D-glycero-beta-D-manno-heptose + diphosphate. The protein operates within nucleotide-sugar biosynthesis; ADP-L-glycero-beta-D-manno-heptose biosynthesis; ADP-L-glycero-beta-D-manno-heptose from D-glycero-beta-D-manno-heptose 7-phosphate: step 1/4. It participates in nucleotide-sugar biosynthesis; ADP-L-glycero-beta-D-manno-heptose biosynthesis; ADP-L-glycero-beta-D-manno-heptose from D-glycero-beta-D-manno-heptose 7-phosphate: step 3/4. In terms of biological role, catalyzes the phosphorylation of D-glycero-D-manno-heptose 7-phosphate at the C-1 position to selectively form D-glycero-beta-D-manno-heptose-1,7-bisphosphate. Functionally, catalyzes the ADP transfer from ATP to D-glycero-beta-D-manno-heptose 1-phosphate, yielding ADP-D-glycero-beta-D-manno-heptose. This chain is Bifunctional protein HldE, found in Helicobacter pylori (strain HPAG1).